The sequence spans 328 residues: Glycerophosphodiester phosphodiesterase GDPD4 (328 aa).

The helical transmembrane segment at 35–55 (TILFAVIFLAIFPPLYFHFKL) threads the bilayer. A GP-PDE domain is found at 73–312 (PLVCAHGGDS…SDPSMFQGLM (240 aa)).

The protein belongs to the glycerophosphoryl diester phosphodiesterase family. As to expression, expressed in rosette and cauline leaves.

The protein localises to the membrane. It carries out the reaction a sn-glycero-3-phosphodiester + H2O = an alcohol + sn-glycerol 3-phosphate + H(+). The protein is Glycerophosphodiester phosphodiesterase GDPD4 of Arabidopsis thaliana (Mouse-ear cress).